The primary structure comprises 993 residues: uncharacterized protein (993 aa).

The signal sequence occupies residues 1 to 28; it reads MKLFPRSILITLVLSFALNLGIVTKIHA. The next 7 membrane-spanning stretches (helical) occupy residues 331–351, 359–379, 392–412, 494–514, 521–541, 554–574, and 699–719; these read IVTAFLTLYVMFFGFKLLLAG, YINFILKMIFVTYFSIGINIT, MIQWAFPFLLDGINGLASWVM, MLVSLALSYPLLVISVAAFMV, MISIVILGILAPLFVPMFLFA, MISFLLQPMVVVTFMITMFSV, and IKNILLALVMACFTLYLMYNF. Positions 779–904 are disordered; sequence GQGGGASDLE…EKVDSTSKGT (126 aa). The segment covering 805-829 has biased composition (low complexity); it reads TSAPAVTTPTASSSVASSSPKTVSS. Pro residues predominate over residues 838–850; it reads PPAPTEAVSPPPA. Residues 866-879 are compositionally biased toward basic and acidic residues; the sequence is IIRDNNQESKKEID.

It belongs to the TrbL/VirB6 family.

The protein resides in the cell membrane. This is an uncharacterized protein from Rickettsia conorii (strain ATCC VR-613 / Malish 7).